We begin with the raw amino-acid sequence, 364 residues long: Fructose-1,6-bisphosphatase class 1 3 (364 aa).

Positions 101, 123, 125, and 126 each coordinate Mg(2+). Residues 126 to 129 (DGSS) and Asn218 each bind substrate. A Mg(2+)-binding site is contributed by Glu290.

Belongs to the FBPase class 1 family. Homotetramer. The cofactor is Mg(2+).

It is found in the cytoplasm. It catalyses the reaction beta-D-fructose 1,6-bisphosphate + H2O = beta-D-fructose 6-phosphate + phosphate. It participates in carbohydrate biosynthesis; gluconeogenesis. In Cupriavidus necator (strain ATCC 17699 / DSM 428 / KCTC 22496 / NCIMB 10442 / H16 / Stanier 337) (Ralstonia eutropha), this protein is Fructose-1,6-bisphosphatase class 1 3.